Here is a 120-residue protein sequence, read N- to C-terminus: Glycine cleavage system H protein (120 aa).

Residues Val17–Lys99 form the Lipoyl-binding domain. Lys58 is subject to N6-lipoyllysine.

Belongs to the GcvH family. In terms of assembly, the glycine cleavage system is composed of four proteins: P, T, L and H. Requires (R)-lipoate as cofactor.

In terms of biological role, the glycine cleavage system catalyzes the degradation of glycine. The H protein shuttles the methylamine group of glycine from the P protein to the T protein. This is Glycine cleavage system H protein from Methylorubrum extorquens (strain PA1) (Methylobacterium extorquens).